The sequence spans 244 residues: NAD-dependent protein deacetylase (244 aa).

Residues 1–244 enclose the Deacetylase sirtuin-type domain; that stretch reads MDDKINKLKE…IGKVLGKVID (244 aa). NAD(+) contacts are provided by Ala24, Thr28, Phe35, Arg36, Gln105, Ile107, Asp108, and His123. A nicotinamide-binding site is contributed by Phe35. Nicotinamide contacts are provided by Ile107 and Asp108. Catalysis depends on His123, which acts as the Proton acceptor. Zn(2+) is bound by residues Cys131, Cys134, Cys152, and Cys155. 4 residues coordinate NAD(+): Thr193, Ser194, Asn217, and Ile235.

It belongs to the sirtuin family. Class U subfamily. Zn(2+) serves as cofactor.

The protein resides in the cytoplasm. It catalyses the reaction N(6)-acetyl-L-lysyl-[protein] + NAD(+) + H2O = 2''-O-acetyl-ADP-D-ribose + nicotinamide + L-lysyl-[protein]. Its function is as follows. NAD-dependent protein deacetylase which modulates the activities of several enzymes which are inactive in their acetylated form. This Clostridium perfringens (strain 13 / Type A) protein is NAD-dependent protein deacetylase.